A 418-amino-acid chain; its full sequence is Glutamyl-tRNA reductase (418 aa).

Residues 49-52 (TCNR), Ser-109, 114-116 (EPQ), and Gln-120 each bind substrate. Cys-50 acts as the Nucleophile in catalysis. 189–194 (GAGETI) is an NADP(+) binding site.

It belongs to the glutamyl-tRNA reductase family. As to quaternary structure, homodimer.

The catalysed reaction is (S)-4-amino-5-oxopentanoate + tRNA(Glu) + NADP(+) = L-glutamyl-tRNA(Glu) + NADPH + H(+). The protein operates within porphyrin-containing compound metabolism; protoporphyrin-IX biosynthesis; 5-aminolevulinate from L-glutamyl-tRNA(Glu): step 1/2. Its function is as follows. Catalyzes the NADPH-dependent reduction of glutamyl-tRNA(Glu) to glutamate 1-semialdehyde (GSA). The protein is Glutamyl-tRNA reductase of Escherichia coli O7:K1 (strain IAI39 / ExPEC).